A 293-amino-acid chain; its full sequence is MRNICVIGSCSMDLVVTSDKRPKAGETVLGTSFQTVPGGKGANQAVAAARLGAQVFMVGKVGDDHYGTAILNNLKANGVRTDYMEPVTHTESGTAHIVLAEGDNSIVVVKGANDDITPAYALNALEQIEKVDMVLIQQEIPEETVDEVCKYCHSHDIPIILNPAPARPLKQETIDHATYLTPNEHEASILFPELTISEALALYPAKLFITEGKQGVRYSAGSKEVLIPSFPVEPVDTTGAGDTFNAAFAVALAEGKDIEAALRFANRAASLSVCSFGAQGGMPTRNEVEELLS.

Substrate contacts are provided by residues 11 to 13 (SMD), 39 to 43 (GKGAN), and Glu139. ATP is bound by residues Asn183 and 210 to 215 (TEGKQG). K(+)-binding residues include Asp236 and Thr238. Residues 241–242 (GD) and Asn266 contribute to the ATP site. Position 242 (Asp242) interacts with substrate. Catalysis depends on Asp242, which acts as the Proton acceptor. The K(+) site is built by Ser272, Ser275, and Gly277.

It belongs to the carbohydrate kinase PfkB family. Ribokinase subfamily. In terms of assembly, homodimer. Requires Mg(2+) as cofactor.

The protein resides in the cytoplasm. It catalyses the reaction D-ribose + ATP = D-ribose 5-phosphate + ADP + H(+). Its pathway is carbohydrate metabolism; D-ribose degradation; D-ribose 5-phosphate from beta-D-ribopyranose: step 2/2. With respect to regulation, activated by a monovalent cation that binds near, but not in, the active site. The most likely occupant of the site in vivo is potassium. Ion binding induces a conformational change that may alter substrate affinity. In terms of biological role, catalyzes the phosphorylation of ribose at O-5 in a reaction requiring ATP and magnesium. The resulting D-ribose-5-phosphate can then be used either for sythesis of nucleotides, histidine, and tryptophan, or as a component of the pentose phosphate pathway. This chain is Ribokinase, found in Bacillus subtilis (strain 168).